The primary structure comprises 459 residues: Cysteine--tRNA ligase (459 aa).

C28 contributes to the Zn(2+) binding site. The short motif at 30–40 is the 'HIGH' region element; that stretch reads VTIYDLCHIGH. Zn(2+) contacts are provided by C209, H234, and E238. Residues 266–270 carry the 'KMSKS' region motif; that stretch reads KMSKS. K269 is an ATP binding site.

It belongs to the class-I aminoacyl-tRNA synthetase family. As to quaternary structure, monomer. Zn(2+) is required as a cofactor.

The protein localises to the cytoplasm. It catalyses the reaction tRNA(Cys) + L-cysteine + ATP = L-cysteinyl-tRNA(Cys) + AMP + diphosphate. This chain is Cysteine--tRNA ligase, found in Shewanella baltica (strain OS195).